A 273-amino-acid chain; its full sequence is 2,3,4,5-tetrahydropyridine-2,6-dicarboxylate N-succinyltransferase (273 aa).

Residues Arg-104 and Asp-141 each coordinate substrate.

Belongs to the transferase hexapeptide repeat family. Homotrimer.

Its subcellular location is the cytoplasm. The catalysed reaction is (S)-2,3,4,5-tetrahydrodipicolinate + succinyl-CoA + H2O = (S)-2-succinylamino-6-oxoheptanedioate + CoA. Its pathway is amino-acid biosynthesis; L-lysine biosynthesis via DAP pathway; LL-2,6-diaminopimelate from (S)-tetrahydrodipicolinate (succinylase route): step 1/3. The protein is 2,3,4,5-tetrahydropyridine-2,6-dicarboxylate N-succinyltransferase of Azoarcus sp. (strain BH72).